Here is a 332-residue protein sequence, read N- to C-terminus: L-lactate dehydrogenase C chain (332 aa).

At Ser-2 the chain carries Blocked amino end (Ser). NAD(+) contacts are provided by residues 29–57 and Arg-99; that span reads GNVG…DENK. 3 residues coordinate substrate: Arg-106, Asn-138, and Arg-169. Asn-138 is a binding site for NAD(+). The Proton acceptor role is filled by His-193. Residue Thr-248 coordinates substrate.

This sequence belongs to the LDH/MDH superfamily. LDH family. In terms of assembly, homotetramer. Interacts with RABL2/RABL2A; binds preferentially to GTP-bound RABL2.

It localises to the cytoplasm. The catalysed reaction is (S)-lactate + NAD(+) = pyruvate + NADH + H(+). The protein operates within fermentation; pyruvate fermentation to lactate; (S)-lactate from pyruvate: step 1/1. Functionally, possible role in sperm motility. The protein is L-lactate dehydrogenase C chain (Ldhc) of Rattus norvegicus (Rat).